The sequence spans 661 residues: 72 kDa type IV collagenase (661 aa).

The first 30 residues, 1–30 (MTEARVSRGALAALLRALCALGCLLGRAAA), serve as a signal peptide directing secretion. Residues 31–110 (APSPIIKFPG…PRCGNPDVAN (80 aa)) constitute a propeptide, activation peptide. Residues 101 to 108 (PRCGNPDV) carry the Cysteine switch motif. A Zn(2+)-binding site is contributed by Cys-103. Residues 111 to 222 (YNFFPRKPKW…LRTLGEGQVV (112 aa)) form a collagenase-like 1 region. Residues Asp-135 and Asp-169 each contribute to the Ca(2+) site. Zn(2+) is bound by residues His-179 and Asp-181. 2 residues coordinate Ca(2+): Asp-186 and Gly-187. Residue His-194 coordinates Zn(2+). Gly-201, Gly-203, and Asp-205 together coordinate Ca(2+). A Zn(2+)-binding site is contributed by His-207. Ca(2+)-binding residues include Asp-209, Asp-210, and Glu-212. The segment at 223–397 (RVKYGNADGE…WGFCPDQGYS (175 aa)) is collagen-binding. Fibronectin type-II domains follow at residues 229–277 (ADGE…FCPH), 287–335 (ADGQ…FCPE), and 345–393 (SEGA…FCPD). 6 disulfide bridges follow: Cys-234-Cys-260, Cys-248-Cys-275, Cys-292-Cys-318, Cys-306-Cys-333, Cys-350-Cys-376, and Cys-364-Cys-391. A collagenase-like 2 region spans residues 398-466 (LFLVAAHEFG…GPTPTLGPVT (69 aa)). His-404 provides a ligand contact to Zn(2+). Glu-405 is a catalytic residue. Zn(2+)-binding residues include His-408 and His-414. The required for inhibitor TIMP2 binding stretch occupies residues 415–661 (SQDPGALMAP…GSIKSDWLGC (247 aa)). Hemopexin repeat units lie at residues 469-517 (LCKQ…WPEL), 518-564 (PEKI…GLPP), 566-614 (VQKV…WNAI), and 615-661 (PDNL…WLGC). The cysteines at positions 470 and 661 are disulfide-linked. Ca(2+) contacts are provided by Asp-477, Asp-522, and Asp-570. Residue Asn-574 is glycosylated (N-linked (GlcNAc...) asparagine). Asp-619 is a binding site for Ca(2+). Asn-643 carries an N-linked (GlcNAc...) asparagine glycan.

Belongs to the peptidase M10A family. As to quaternary structure, interacts (via the C-terminal hemopexin-like domains-containing region) with the integrin alpha-V/beta-3; the interaction promotes vascular invasion in angiogenic vessels and melamoma cells. Interacts (via the C-terminal PEX domain) with TIMP2 (via the C-terminal); the interaction inhibits the degradation activity. Interacts with GSK3B. It depends on Ca(2+) as a cofactor. The cofactor is Zn(2+). In terms of processing, phosphorylation on multiple sites modulates enzymatic activity. Phosphorylated by PKC in vitro. Post-translationally, the propeptide is processed by MMP14 (MT-MMP1) and MMP16 (MT-MMP3). Autocatalytic cleavage in the C-terminal produces the anti-angiogenic peptide, PEX. This processing appears to be facilitated by binding integrinv/beta3.

It is found in the secreted. The protein resides in the extracellular space. Its subcellular location is the extracellular matrix. The protein localises to the membrane. It localises to the nucleus. The enzyme catalyses Cleavage of gelatin type I and collagen types IV, V, VII, X. Cleaves the collagen-like sequence Pro-Gln-Gly-|-Ile-Ala-Gly-Gln.. Ubiquitinous metalloproteinase that is involved in diverse functions such as remodeling of the vasculature, angiogenesis, tissue repair, tumor invasion, inflammation, and atherosclerotic plaque rupture. As well as degrading extracellular matrix proteins, can also act on several nonmatrix proteins such as big endothelial 1 and beta-type CGRP promoting vasoconstriction. Also cleaves KISS at a Gly-|-Leu bond. Appears to have a role in myocardial cell death pathways. Contributes to myocardial oxidative stress by regulating the activity of GSK3beta. Cleaves GSK3beta in vitro. Involved in the formation of the fibrovascular tissues. Functionally, PEX, the C-terminal non-catalytic fragment of MMP2, possesses anti-angiogenic and anti-tumor properties and inhibits cell migration and cell adhesion to FGF2 and vitronectin. Ligand for integrin alpha-v/beta-3 on the surface of blood vessels. The polypeptide is 72 kDa type IV collagenase (MMP2) (Bos taurus (Bovine)).